The sequence spans 328 residues: MQNQLNALLQSAKKSVADAQSEIVLEEIRVDYLGKKGKLTELLKSVGQMPADQRPLLGKAVNEIKREIQQLLNAKSTQLREKSLQEKLNKEKVDITLRGRYDHLGAIHPISRVSERVSQLFSMLGFQIAEGPEIENEYYNFEALNIPADHPARTMADTFYFSGDKLLRTHTSPVQIREMEKQGVPIRLIALGRVYRRDLDQTHTPMFHQVEGLVIDKRSTFANLKGLLQQFLNCFFEKDVRLRFRPSYFPFTEPSAEVDIYQPRTDKWLEVLGCGMVHPNVLRNLNIDPDEYSGFAFGIGLDRLAMLRYEVTDLRLFFENDLRFLGQF.

A Mg(2+)-binding site is contributed by E253.

It belongs to the class-II aminoacyl-tRNA synthetase family. Phe-tRNA synthetase alpha subunit type 1 subfamily. As to quaternary structure, tetramer of two alpha and two beta subunits. Mg(2+) is required as a cofactor.

The protein localises to the cytoplasm. It carries out the reaction tRNA(Phe) + L-phenylalanine + ATP = L-phenylalanyl-tRNA(Phe) + AMP + diphosphate + H(+). The protein is Phenylalanine--tRNA ligase alpha subunit of Coxiella burnetii (strain Dugway 5J108-111).